A 329-amino-acid polypeptide reads, in one-letter code: Ketol-acid reductoisomerase (NADP(+)) (329 aa).

Residues 2-182 (TQLFYDTDAD…GGTRAGILET (181 aa)) form the KARI N-terminal Rossmann domain. NADP(+) is bound by residues 25-28 (YGSQ), Ser51, Ser53, and 83-86 (DEFQ). His108 is an active-site residue. An NADP(+)-binding site is contributed by Gly134. Residues 183-328 (NFKEETETDL…KSLRSMFSWL (146 aa)) form the KARI C-terminal knotted domain. Residues Asp191, Glu195, Glu227, and Glu231 each contribute to the Mg(2+) site. Substrate is bound at residue Ser252.

This sequence belongs to the ketol-acid reductoisomerase family. Mg(2+) is required as a cofactor.

It catalyses the reaction (2R)-2,3-dihydroxy-3-methylbutanoate + NADP(+) = (2S)-2-acetolactate + NADPH + H(+). The enzyme catalyses (2R,3R)-2,3-dihydroxy-3-methylpentanoate + NADP(+) = (S)-2-ethyl-2-hydroxy-3-oxobutanoate + NADPH + H(+). It participates in amino-acid biosynthesis; L-isoleucine biosynthesis; L-isoleucine from 2-oxobutanoate: step 2/4. Its pathway is amino-acid biosynthesis; L-valine biosynthesis; L-valine from pyruvate: step 2/4. In terms of biological role, involved in the biosynthesis of branched-chain amino acids (BCAA). Catalyzes an alkyl-migration followed by a ketol-acid reduction of (S)-2-acetolactate (S2AL) to yield (R)-2,3-dihydroxy-isovalerate. In the isomerase reaction, S2AL is rearranged via a Mg-dependent methyl migration to produce 3-hydroxy-3-methyl-2-ketobutyrate (HMKB). In the reductase reaction, this 2-ketoacid undergoes a metal-dependent reduction by NADPH to yield (R)-2,3-dihydroxy-isovalerate. This is Ketol-acid reductoisomerase (NADP(+)) from Prochlorococcus marinus (strain MIT 9301).